The chain runs to 213 residues: Large ribosomal subunit protein uL1 (213 aa).

It belongs to the universal ribosomal protein uL1 family. Part of the 50S ribosomal subunit.

Functionally, binds directly to 23S rRNA. Probably involved in E site tRNA release. Its function is as follows. Protein L1 is also a translational repressor protein, it controls the translation of its operon by binding to its mRNA. This Methanosarcina barkeri (strain Fusaro / DSM 804) protein is Large ribosomal subunit protein uL1.